The chain runs to 65 residues: Sperm protamine P1 (65 aa).

The disordered stretch occupies residues 1 to 65 (MARYRHSRSR…RYSRRRRRRY (65 aa)).

It belongs to the protamine P1 family. As to expression, testis.

The protein resides in the nucleus. The protein localises to the chromosome. In terms of biological role, protamines substitute for histones in the chromatin of sperm during the haploid phase of spermatogenesis. They compact sperm DNA into a highly condensed, stable and inactive complex. The sequence is that of Sperm protamine P1 (PRM1) from Lagorchestes hirsutus (Rufous hare-wallaby).